The following is a 226-amino-acid chain: 7-cyano-7-deazaguanine synthase (226 aa).

ATP is bound at residue 7–17 (ISGGMDSLVTT). Positions 187, 195, 198, and 201 each coordinate Zn(2+).

The protein belongs to the QueC family. It depends on Zn(2+) as a cofactor.

It catalyses the reaction 7-carboxy-7-deazaguanine + NH4(+) + ATP = 7-cyano-7-deazaguanine + ADP + phosphate + H2O + H(+). It participates in purine metabolism; 7-cyano-7-deazaguanine biosynthesis. Catalyzes the ATP-dependent conversion of 7-carboxy-7-deazaguanine (CDG) to 7-cyano-7-deazaguanine (preQ(0)). This Chlorobium limicola (strain DSM 245 / NBRC 103803 / 6330) protein is 7-cyano-7-deazaguanine synthase.